The primary structure comprises 415 residues: G-protein coupled receptor daf-38 (415 aa).

Over residues 1-19 the composition is skewed to low complexity; it reads MLLPSNLTTSTLMTSSSES. Residues 1 to 25 form a disordered region; sequence MLLPSNLTTSTLMTSSSESYDADNP. At 1–35 the chain is on the extracellular side; it reads MLLPSNLTTSTLMTSSSESYDADNPGLPPEPILSD. Residues 36–56 form a helical membrane-spanning segment; sequence YVEMFTLVLNFIVGAPLNLAA. Residues 57-75 are Cytoplasmic-facing; that stretch reads YTQLSERPTSTRLDLLKRS. The chain crosses the membrane as a helical span at residues 76-96; it reads LNYSDLLVLFIYVPSRACWLL. The Extracellular segment spans residues 97 to 108; the sequence is TYDWRGGDALCK. A disulfide bridge connects residues C107 and C187. The chain crosses the membrane as a helical span at residues 109–129; the sequence is IVKMFHTFAFQSSSNVIVCIA. Residues 130–152 lie on the Cytoplasmic side of the membrane; sequence VDRLLSVLSPSHHSPNKALKRTK. A helical transmembrane segment spans residues 153 to 173; sequence MMLIVAWIVALVISCPQLFIW. The Extracellular segment spans residues 174 to 222; it reads KAYLALPEYNWSQCLQIWEIARMEKFNKPQVVPEFDAEFWYSILHISLV. The chain crosses the membrane as a helical span at residues 223–243; sequence FWIPCIIIMLSYIIVISWVWI. The Cytoplasmic segment spans residues 244 to 345; it reads NSRPSIRHTS…NLNRSRALRV (102 aa). Residues 346-366 form a helical membrane-spanning segment; it reads SLLLVVAYIICWLPYNLISLI. Residues 367–382 lie on the Extracellular side of the membrane; the sequence is QFLDRDFFSSYLKHVH. Residues 383-403 traverse the membrane as a helical segment; that stretch reads FCQQLIIFNSVVNPWLYGFFG. The Cytoplasmic segment spans residues 404 to 415; sequence PRRPSTTGAGRH.

It belongs to the G-protein coupled receptor 1 family. In terms of assembly, heterodimer; with daf-37. As to expression, expressed in the ASI and ASK chemosensory neurons and in the IL-2 interneurons, but weakly expressed in other head neurons in hermaphrodites.

It localises to the cell membrane. G-protein coupled receptor (GPCR) that forms a heterodimer with daf-37 to control dauer formation and behavior. Required for the response to dauer inducing pheromones such as the ascarosides ascr#2, ascr#3 and ascr#5. The protein is G-protein coupled receptor daf-38 of Caenorhabditis elegans.